A 311-amino-acid polypeptide reads, in one-letter code: Methionyl-tRNA formyltransferase (311 aa).

(6S)-5,6,7,8-tetrahydrofolate is bound at residue 112-115 (SLLP).

Belongs to the Fmt family.

It carries out the reaction L-methionyl-tRNA(fMet) + (6R)-10-formyltetrahydrofolate = N-formyl-L-methionyl-tRNA(fMet) + (6S)-5,6,7,8-tetrahydrofolate + H(+). Functionally, attaches a formyl group to the free amino group of methionyl-tRNA(fMet). The formyl group appears to play a dual role in the initiator identity of N-formylmethionyl-tRNA by promoting its recognition by IF2 and preventing the misappropriation of this tRNA by the elongation apparatus. This chain is Methionyl-tRNA formyltransferase, found in Sinorhizobium medicae (strain WSM419) (Ensifer medicae).